The chain runs to 298 residues: Probable alpha-L-glutamate ligase (298 aa).

Positions 108–290 (LQLLLKTGVP…IAAEIIDYIE (183 aa)) constitute an ATP-grasp domain. Residues K144, 181-182 (DF), D190, and 214-216 (RAN) contribute to the ATP site. Mg(2+)-binding residues include D251, E263, and N265. The Mn(2+) site is built by D251, E263, and N265.

The protein belongs to the RimK family. Mg(2+) is required as a cofactor. Requires Mn(2+) as cofactor.

The protein is Probable alpha-L-glutamate ligase of Haemophilus influenzae (strain PittEE).